A 460-amino-acid chain; its full sequence is Serine--tRNA ligase (460 aa).

242–244 contributes to the L-serine binding site; it reads TAE. ATP contacts are provided by residues 273–275 and valine 289; that span reads RRE. Glutamate 296 lines the L-serine pocket. 369 to 372 contacts ATP; it reads EVSS. Residue serine 405 coordinates L-serine.

This sequence belongs to the class-II aminoacyl-tRNA synthetase family. Type-1 seryl-tRNA synthetase subfamily. Homodimer. The tRNA molecule binds across the dimer.

Its subcellular location is the cytoplasm. The catalysed reaction is tRNA(Ser) + L-serine + ATP = L-seryl-tRNA(Ser) + AMP + diphosphate + H(+). The enzyme catalyses tRNA(Sec) + L-serine + ATP = L-seryl-tRNA(Sec) + AMP + diphosphate + H(+). The protein operates within aminoacyl-tRNA biosynthesis; selenocysteinyl-tRNA(Sec) biosynthesis; L-seryl-tRNA(Sec) from L-serine and tRNA(Sec): step 1/1. In terms of biological role, catalyzes the attachment of serine to tRNA(Ser). Is also able to aminoacylate tRNA(Sec) with serine, to form the misacylated tRNA L-seryl-tRNA(Sec), which will be further converted into selenocysteinyl-tRNA(Sec). In Haloquadratum walsbyi (strain DSM 16790 / HBSQ001), this protein is Serine--tRNA ligase.